The following is a 590-amino-acid chain: Hyaluronan synthase 1 (590 aa).

Over 1 to 31 (MKDKAAATMEIPEDPGIPKNLERKRPIVWRM) the chain is Cytoplasmic. Residues 32–52 (IYYSFAVLLLAAFTAAYVTEF) form a helical membrane-spanning segment. The Extracellular segment spans residues 53-60 (QILTHEDV). The helical transmembrane segment at 61–81 (LFSLGLYGLVMFLHLMMQSLF) threads the bilayer. The Cytoplasmic portion of the chain corresponds to 82–401 (AYLEIRRINK…YNAQWWYKHH (320 aa)). Residues 402-422 (IWMTYESVVHFIFPFFITATV) traverse the membrane as a helical segment. The Extracellular segment spans residues 423–425 (IRL). A helical membrane pass occupies residues 426-446 (LYASTIWNVVWLLLCIQIMSV). At 447 to 456 (LKSLYACWLR) the chain is on the cytoplasmic side. The helical transmembrane segment at 457–477 (GNPIMLLMSLYSMLYMTGLLP) threads the bilayer. The Extracellular portion of the chain corresponds to 478–505 (SKYFAMLTINKSGWGTSGRKKIVGNYMP). Residues 506–526 (VLPLSIWMAVLCGGVGYSIYM) traverse the membrane as a helical segment. Topologically, residues 527–543 (DCHQDWSTPEKQKELYH) are cytoplasmic. A helical transmembrane segment spans residues 544–564 (LLYGCISYTLYWVLMALMYWV). The Extracellular portion of the chain corresponds to 565–588 (WVKRCCRKRSQTVTLVHDIPERLV).

The protein belongs to the NodC/HAS family. Mg(2+) is required as a cofactor.

It is found in the membrane. It carries out the reaction [hyaluronan](n) + UDP-N-acetyl-alpha-D-glucosamine = N-acetyl-beta-D-glucosaminyl-(1-&gt;4)-[hyaluronan](n) + UDP + H(+). The catalysed reaction is N-acetyl-beta-D-glucosaminyl-(1-&gt;4)-[hyaluronan](n) + UDP-alpha-D-glucuronate = [hyaluronan](n+1) + UDP + H(+). It functions in the pathway glycan biosynthesis; hyaluronan biosynthesis. In terms of biological role, catalyzes the addition of GlcNAc or GlcUA monosaccharides to the nascent hyaluronan polymer. Therefore, it is essential to hyaluronan synthesis a major component of most extracellular matrices that has a structural role in tissues architectures and regulates cell adhesion, migration and differentiation. Also able to catalyze the synthesis of chito-oligosaccharide depending on the substrate. This is Hyaluronan synthase 1 (has1) from Xenopus tropicalis (Western clawed frog).